Here is a 1484-residue protein sequence, read N- to C-terminus: Ral GTPase-activating protein subunit beta (1484 aa).

2 disordered regions span residues 355-437 (PRSD…APRR) and 699-728 (ENNLKSHSRTNSGISSASGGSTEPTTPDSE). S359 carries the post-translational modification Phosphoserine. A phosphothreonine mark is found at T363 and T379. 3 stretches are compositionally biased toward polar residues: residues 369 to 381 (SMPQSAAVNTTPP), 392 to 428 (NKATMKTSTVTTAHTSKVQHQASSTSPLSSPNQTSSE), and 701 to 725 (NLKSHSRTNSGISSASGGSTEPTTP). Residues S421 and S710 each carry the phosphoserine modification. T724 is subject to Phosphothreonine. The 245-residue stretch at 1138 to 1382 (IGYLDLLPCR…TTLEKEVPVI (245 aa)) folds into the Rap-GAP domain. The residue at position 1275 (S1275) is a Phosphoserine. The interval 1297–1325 (PNHTDSLNSSQRLSPSSRMKKLPQGRPVP) is disordered. The span at 1302–1313 (SLNSSQRLSPSS) shows a compositional bias: low complexity.

In terms of assembly, component of the heterodimeric RalGAP1 complex with RALGAPA1 and of the heterodimeric RalGAP2 complex with RALGAPA2. Heterodimerization is required for activity. As to expression, abundantly expressed in testis, pancreas, lung, thymus, brown fat, and white fat. Expressed at lower levels in the brain.

Its function is as follows. Non-catalytic subunit of the heterodimeric RalGAP1 and RalGAP2 complexes which act as GTPase activators for the Ras-like small GTPases RALA and RALB. In Mus musculus (Mouse), this protein is Ral GTPase-activating protein subunit beta (Ralgapb).